The chain runs to 120 residues: Ribosome-binding factor A (120 aa).

The protein belongs to the RbfA family. As to quaternary structure, monomer. Binds 30S ribosomal subunits, but not 50S ribosomal subunits or 70S ribosomes.

It localises to the cytoplasm. One of several proteins that assist in the late maturation steps of the functional core of the 30S ribosomal subunit. Associates with free 30S ribosomal subunits (but not with 30S subunits that are part of 70S ribosomes or polysomes). Required for efficient processing of 16S rRNA. May interact with the 5'-terminal helix region of 16S rRNA. This is Ribosome-binding factor A from Borreliella burgdorferi (strain ATCC 35210 / DSM 4680 / CIP 102532 / B31) (Borrelia burgdorferi).